Consider the following 427-residue polypeptide: Tol-Pal system protein TolB (427 aa).

Positions 1-27 are cleaved as a signal peptide; the sequence is MPVSLLRALLVFSLLCLGLSATRAAHA.

It belongs to the TolB family. In terms of assembly, the Tol-Pal system is composed of five core proteins: the inner membrane proteins TolA, TolQ and TolR, the periplasmic protein TolB and the outer membrane protein Pal. They form a network linking the inner and outer membranes and the peptidoglycan layer.

It localises to the periplasm. Part of the Tol-Pal system, which plays a role in outer membrane invagination during cell division and is important for maintaining outer membrane integrity. The chain is Tol-Pal system protein TolB from Thiobacillus denitrificans (strain ATCC 25259 / T1).